The following is a 201-amino-acid chain: Protease (201 aa).

Residues His55, Asp72, and Cys122 contribute to the active site.

Belongs to the peptidase C5 family. As to quaternary structure, interacts with protease cofactor pVI-C; this interaction is necessary for protease activation.

It is found in the virion. It localises to the host nucleus. It catalyses the reaction Cleaves proteins of the adenovirus and its host cell at two consensus sites: -Yaa-Xaa-Gly-Gly-|-Xaa- and -Yaa-Xaa-Gly-Xaa-|-Gly- (in which Yaa is Met, Ile or Leu, and Xaa is any amino acid).. Requires DNA and protease cofactor for maximal activation. Inside nascent virions, becomes partially activated by binding to the viral DNA, allowing it to cleave the cofactor that binds to the protease and fully activates it. Actin, like the viral protease cofactor, seems to act as a cofactor in the cleavage of cytokeratin 18 and of actin itself. Functionally, cleaves viral precursor proteins (pTP, pIIIa, pVI, pVII, pVIII, and pX) inside newly assembled particles giving rise to mature virions. Protease complexed to its cofactor slides along the viral DNA to specifically locate and cleave the viral precursors. Mature virions have a weakened organization compared to the unmature virions, thereby facilitating subsequent uncoating. Without maturation, the particle lacks infectivity and is unable to uncoat. Late in adenovirus infection, in the cytoplasm, may participate in the cytoskeleton destruction. Cleaves host cell cytoskeletal keratins K7 and K18. The chain is Protease from Ovis aries (Sheep).